Consider the following 152-residue polypeptide: Neuropeptide W (152 aa).

The N-terminal stretch at 1-32 is a signal peptide; the sequence is MGARGPGPGATARRRLLALLLLLLLLPLPARA. Residues 65 to 152 constitute a propeptide that is removed on maturation; the sequence is ALRPAAGPLA…LGASSWTSAE (88 aa). Disordered regions lie at residues 79-108 and 122-152; these read GQDV…LPPG and SGIP…TSAE. Positions 96 to 106 are enriched in pro residues; that stretch reads GPAPRDAPLLP.

It belongs to the neuropeptide B/W family.

Its subcellular location is the secreted. Functionally, plays a regulatory role in the organization of neuroendocrine signals accessing the anterior pituitary gland. Stimulates water drinking and food intake. May play a role in the hypothalamic response to stress. The protein is Neuropeptide W (NPW) of Sus scrofa (Pig).